A 353-amino-acid polypeptide reads, in one-letter code: C2 calcium-dependent domain-containing protein 4D (353 aa).

The disordered stretch occupies residues 135–191; the sequence is CRAPDSDTASSPDSSPFGSPRPGLGRRRVSRPHSLSPEKASSADTSPHSPRRAGPPT. Residues 140–150 show a composition bias toward low complexity; sequence SDTASSPDSSP. One can recognise a C2 domain in the interval 217 to 343; sequence RGGQLRLSTE…PPLGGGLGPG (127 aa).

This is C2 calcium-dependent domain-containing protein 4D (C2CD4D) from Homo sapiens (Human).